We begin with the raw amino-acid sequence, 293 residues long: tRNA pseudouridine synthase B (293 aa).

Asp40 acts as the Nucleophile in catalysis.

It belongs to the pseudouridine synthase TruB family. Type 1 subfamily.

The enzyme catalyses uridine(55) in tRNA = pseudouridine(55) in tRNA. Responsible for synthesis of pseudouridine from uracil-55 in the psi GC loop of transfer RNAs. In Rickettsia akari (strain Hartford), this protein is tRNA pseudouridine synthase B.